The sequence spans 329 residues: GTP 3',8-cyclase (329 aa).

The Radical SAM core domain maps to 8-234; the sequence is AFARKFYYLR…QLRQRSDGPA (227 aa). Arginine 17 is a binding site for GTP. Residues cysteine 24 and cysteine 28 each contribute to the [4Fe-4S] cluster site. Tyrosine 30 lines the S-adenosyl-L-methionine pocket. [4Fe-4S] cluster is bound at residue cysteine 31. Arginine 68 contributes to the GTP binding site. Residue glycine 72 participates in S-adenosyl-L-methionine binding. Residue threonine 99 participates in GTP binding. Serine 123 contacts S-adenosyl-L-methionine. Residue lysine 160 coordinates GTP. Methionine 194 provides a ligand contact to S-adenosyl-L-methionine. Cysteine 257 and cysteine 260 together coordinate [4Fe-4S] cluster. Position 262–264 (262–264) interacts with GTP; the sequence is RLR. Cysteine 274 is a [4Fe-4S] cluster binding site.

It belongs to the radical SAM superfamily. MoaA family. In terms of assembly, monomer and homodimer. Requires [4Fe-4S] cluster as cofactor.

It carries out the reaction GTP + AH2 + S-adenosyl-L-methionine = (8S)-3',8-cyclo-7,8-dihydroguanosine 5'-triphosphate + 5'-deoxyadenosine + L-methionine + A + H(+). It functions in the pathway cofactor biosynthesis; molybdopterin biosynthesis. Its function is as follows. Catalyzes the cyclization of GTP to (8S)-3',8-cyclo-7,8-dihydroguanosine 5'-triphosphate. This Escherichia coli O127:H6 (strain E2348/69 / EPEC) protein is GTP 3',8-cyclase.